A 214-amino-acid chain; its full sequence is Large ribosomal subunit protein bL25 (214 aa).

Residues 189-214 are disordered; sequence IHASRKAKADEDEAAEGEEGEEGAED. Residues 198-214 are compositionally biased toward acidic residues; that stretch reads DEDEAAEGEEGEEGAED.

Belongs to the bacterial ribosomal protein bL25 family. CTC subfamily. In terms of assembly, part of the 50S ribosomal subunit; part of the 5S rRNA/L5/L18/L25 subcomplex. Contacts the 5S rRNA. Binds to the 5S rRNA independently of L5 and L18.

This is one of the proteins that binds to the 5S RNA in the ribosome where it forms part of the central protuberance. The sequence is that of Large ribosomal subunit protein bL25 from Alkalilimnicola ehrlichii (strain ATCC BAA-1101 / DSM 17681 / MLHE-1).